The sequence spans 78 residues: Putative membrane protein insertion efficiency factor (78 aa).

Belongs to the UPF0161 family.

The protein resides in the cell inner membrane. Its function is as follows. Could be involved in insertion of integral membrane proteins into the membrane. In Thiobacillus denitrificans (strain ATCC 25259 / T1), this protein is Putative membrane protein insertion efficiency factor.